The chain runs to 192 residues: Protein FAM210B, mitochondrial (192 aa).

The transit peptide at 1 to 58 (MAGLLALLGPAGRVGARVRPRATWLLGATAPCAPPPLALALLPPRLDARLLRTARGDC) directs the protein to the mitochondrion. The disordered stretch occupies residues 57–80 (DCRGHQDPSQATGTTGSSVSCTEE). Positions 63–77 (DPSQATGTTGSSVSC) are enriched in polar residues. The DUF1279 domain occupies 80 to 191 (EKKQSKSQQL…VGFFKPPAAK (112 aa)). 2 helical membrane-spanning segments follow: residues 99–119 (VGVS…YMVV) and 150–170 (FVVA…ITLV).

This sequence belongs to the FAM210 family. In terms of tissue distribution, expressed in late erythroblast differentiation stages. Underexpressed in ovarian cancer epithelia cells compared with normal human ovarian surface epithelia.

The protein localises to the mitochondrion. Its subcellular location is the mitochondrion outer membrane. Functionally, plays a role in erythroid differentiation. Involved in cell proliferation and tumor cell growth suppression. Involved in the metabolic reprogramming of cancer cells in a PDK4-dependent manner. This chain is Protein FAM210B, mitochondrial, found in Homo sapiens (Human).